The chain runs to 366 residues: D-alanine--D-alanine ligase (366 aa).

Residues 149-358 enclose the ATP-grasp domain; it reads KIAFDHAGLP…FSELVDTLIQ (210 aa). 185–240 is a binding site for ATP; sequence ETTLEYPCFVKPANLGSSVGIAKVRSRSELETALDNAASYDRRIIVEAGVEAKELE. Residues aspartate 311, glutamate 325, and asparagine 327 each contribute to the Mg(2+) site.

It belongs to the D-alanine--D-alanine ligase family. Mg(2+) serves as cofactor. Mn(2+) is required as a cofactor.

Its subcellular location is the cytoplasm. It carries out the reaction 2 D-alanine + ATP = D-alanyl-D-alanine + ADP + phosphate + H(+). It functions in the pathway cell wall biogenesis; peptidoglycan biosynthesis. Its function is as follows. Cell wall formation. The chain is D-alanine--D-alanine ligase from Trichodesmium erythraeum (strain IMS101).